The following is an 85-amino-acid chain: Senescence-associated and QQS-related protein (85 aa).

A compositionally biased stretch (basic and acidic residues) spans 1–24; it reads MSFRKVEKKPTEMGRNMTHEKSDS. 2 disordered regions span residues 1–35 and 55–85; these read MSFR…PMTV and SGKA…FPNY. Over residues 58 to 77 the composition is skewed to polar residues; the sequence is ARSNYNLTGTAKGTGPINSF.

In terms of tissue distribution, expressed predominantly within leaves and cotyledons vasculatures. Mainly observed in fully expanded leaves, at the base of mature inflorescences, in senescing leaves and cauline leaves, and, to a lower extent, in hypocotyls and rosette leaves prior to flowering.

Plays a role in carbon allocation, including during senescence and stresses, thus impacting starch accumulation. This is Senescence-associated and QQS-related protein from Arabidopsis thaliana (Mouse-ear cress).